A 410-amino-acid polypeptide reads, in one-letter code: Putative ribosomal large subunit pseudouridine synthase SVR1, chloroplastic (410 aa).

The transit peptide at 1 to 35 directs the protein to the chloroplast; the sequence is MASVAASSSISFAASFLKIKAFPLSPRFFPIRTLR. The segment at 96-143 is disordered; sequence HNLAIDATTQNPKKKDKSKKKQPQATSSSSATTTASSPASHSEVKPKL. A compositionally biased stretch (basic residues) spans 107–117; it reads PKKKDKSKKKQ. Positions 118–135 are enriched in low complexity; it reads PQATSSSSATTTASSPAS. The 70-residue stretch at 160–229 folds into the S4 RNA-binding domain; that stretch reads QRLSKVLAAA…PKVYFALNKP (70 aa). The active-site Nucleophile is the D274.

The protein belongs to the pseudouridine synthase RsuA family. In terms of tissue distribution, highly expressed in young seedlings. Expressed in roots, rosette leaves, cauline leaves, stems and flowers.

It localises to the plastid. The protein localises to the chloroplast. Responsible for synthesis of pseudouridine in chloroplastic 23S ribosomal RNA. Necessary for normal chloroplast rRNA processing and translation. Required for normal chloroplast development and maintenance. May function in other plastids, such as root amyloplasts. The polypeptide is Putative ribosomal large subunit pseudouridine synthase SVR1, chloroplastic (SVR1) (Arabidopsis thaliana (Mouse-ear cress)).